The primary structure comprises 528 residues: Catalase (528 aa).

Residues Met-1–Gln-22 show a composition bias toward basic and acidic residues. The disordered stretch occupies residues Met-1–Gly-32. Catalysis depends on residues His-75 and Asn-148. Residues His-194, Ser-201, Arg-203, Asn-213, Lys-237, Trp-303, His-305, and Lys-306 each coordinate NADP(+). Tyr-358 serves as a coordination point for heme. Positions Lys-525–Leu-528 match the Microbody targeting signal; atypical motif.

This sequence belongs to the catalase family. As to quaternary structure, homotetramer. Heme serves as cofactor. Requires NADP(+) as cofactor.

Its subcellular location is the peroxisome matrix. It catalyses the reaction 2 H2O2 = O2 + 2 H2O. Functionally, catalyzes the degradation of hydrogen peroxide (H(2)O(2)) generated by peroxisomal oxidases to water and oxygen, thereby protecting cells from the toxic effects of hydrogen peroxide. The chain is Catalase (cat) from Glandirana rugosa (Japanese wrinkled frog).